The primary structure comprises 43 residues: uncharacterized protein (43 aa).

Belongs to the ELIP/psbS family.

Its subcellular location is the plastid. The protein resides in the chloroplast. In terms of biological role, possible role in chlorophyll and/or carotenoid binding. This is an uncharacterized protein from Cyanidium caldarium (Red alga).